Reading from the N-terminus, the 138-residue chain is Aspartate 1-decarboxylase (138 aa).

S25 acts as the Schiff-base intermediate with substrate; via pyruvic acid in catalysis. A Pyruvic acid (Ser) modification is found at S25. T57 is a binding site for substrate. Y58 acts as the Proton donor in catalysis. 73-75 (GAA) lines the substrate pocket. Positions 116–138 (ELGGDPAQVPDGSGLKNPRHPEA) are disordered.

It belongs to the PanD family. In terms of assembly, heterooctamer of four alpha and four beta subunits. Requires pyruvate as cofactor. Post-translationally, is synthesized initially as an inactive proenzyme, which is activated by self-cleavage at a specific serine bond to produce a beta-subunit with a hydroxyl group at its C-terminus and an alpha-subunit with a pyruvoyl group at its N-terminus.

It localises to the cytoplasm. The enzyme catalyses L-aspartate + H(+) = beta-alanine + CO2. It functions in the pathway cofactor biosynthesis; (R)-pantothenate biosynthesis; beta-alanine from L-aspartate: step 1/1. Its function is as follows. Catalyzes the pyruvoyl-dependent decarboxylation of aspartate to produce beta-alanine. The chain is Aspartate 1-decarboxylase from Corynebacterium jeikeium (strain K411).